Here is a 508-residue protein sequence, read N- to C-terminus: Photosystem II CP47 reaction center protein (508 aa).

6 helical membrane-spanning segments follow: residues 21-36 (AVHI…WAGS), 101-115 (IVFS…IWHW), 140-156 (GIHL…FGAF), 203-218 (IAAG…FHLS), 237-252 (VLSS…AFVV), and 457-472 (TFAL…HGAR).

The protein belongs to the PsbB/PsbC family. PsbB subfamily. PSII is composed of 1 copy each of membrane proteins PsbA, PsbB, PsbC, PsbD, PsbE, PsbF, PsbH, PsbI, PsbJ, PsbK, PsbL, PsbM, PsbT, PsbX, PsbY, PsbZ, Psb30/Ycf12, at least 3 peripheral proteins of the oxygen-evolving complex and a large number of cofactors. It forms dimeric complexes. Binds multiple chlorophylls. PSII binds additional chlorophylls, carotenoids and specific lipids. serves as cofactor.

The protein resides in the plastid. The protein localises to the chloroplast thylakoid membrane. Functionally, one of the components of the core complex of photosystem II (PSII). It binds chlorophyll and helps catalyze the primary light-induced photochemical processes of PSII. PSII is a light-driven water:plastoquinone oxidoreductase, using light energy to abstract electrons from H(2)O, generating O(2) and a proton gradient subsequently used for ATP formation. The protein is Photosystem II CP47 reaction center protein of Lolium perenne (Perennial ryegrass).